A 438-amino-acid polypeptide reads, in one-letter code: Ribosomal protein uS12 methylthiotransferase RimO (438 aa).

One can recognise an MTTase N-terminal domain in the interval 1–116 (MNVGFISLGC…IWKEIENLLD (116 aa)). Positions 10, 46, 79, 147, 151, and 154 each coordinate [4Fe-4S] cluster. Residues 133–363 (TTGSNMAYLK…MALQEKISRE (231 aa)) enclose the Radical SAM core domain. Positions 366–435 (EQKVGNVYKV…DYDLFGELYT (70 aa)) constitute a TRAM domain.

This sequence belongs to the methylthiotransferase family. RimO subfamily. Requires [4Fe-4S] cluster as cofactor.

Its subcellular location is the cytoplasm. The catalysed reaction is L-aspartate(89)-[ribosomal protein uS12]-hydrogen + (sulfur carrier)-SH + AH2 + 2 S-adenosyl-L-methionine = 3-methylsulfanyl-L-aspartate(89)-[ribosomal protein uS12]-hydrogen + (sulfur carrier)-H + 5'-deoxyadenosine + L-methionine + A + S-adenosyl-L-homocysteine + 2 H(+). In terms of biological role, catalyzes the methylthiolation of an aspartic acid residue of ribosomal protein uS12. The chain is Ribosomal protein uS12 methylthiotransferase RimO from Alkaliphilus oremlandii (strain OhILAs) (Clostridium oremlandii (strain OhILAs)).